Reading from the N-terminus, the 1097-residue chain is MSSSAIQVAKTATFLPDLVEVQRASFKWFLDKGLIEELESFSPITDYTGKLELHFIGSEYRLKRPRHDVEEAKRRDATFASQMYVTCRLVNKETGEIKEQEVFIGELPLMTERGTFIINGAERVIVNQIVRSPGVYFKDEMDKNGRRTYNASVIPNRGAWLKFETDKNDLLHVRVDKTRKINAHVLMRAMGLSDNDVLDKLRHPEFYKKSIDAANDEGISSEDQALLELYKKLRPGEPPSVSGGQQLLQTRFFDAKRYDLGRVGRYKINKKLRLTIPDTVRTLTHEDVLSTLDYLINLELDVGGASLDDIDHLGNRRVRSVGELLQNQVRVGLNRLERIIKERMTVGETDSLTPAQLVNPKPLVAAIKEFFGSSQLSQFMDQTNPLAELTHKRRISALGPGGLTRERAGFAVRDIHPSHYGRLCPIETPEGPNAGLINSLATHARVNEYGFIETPFWKVENGVVIKSGDPIYLSADREDEVRVAPGDVATEDNGEIKADLIPVRYRQDFEKVPPEQVDYVALSPVQVISVATSLIPFLEHDDANRALMGSNMQRQAVPLLRPERALVGTGLETQVARDSGMVPISRVNGTVVYVDANAIVVLDEDGQEHTHFLQKYQRSNQDTCLNQRPIVHQGDPVIVGQVLADGSACEGGEIALGQNVLIAYMPWEGYNYEDALLVSERLVTDDLYTSVHIEKYEIEARQTKLGPEEITREIPNVAEESLGNLDEMGIIRVGAFVESGDILVGKVTPKGESDQPPEEKLLRAIFGEKARDVRDNSLRVPGTERGRVVDVRIYTREQGDELPPGANMVVRVYVAQRRKIQVGDKMAGRHGNKGIISRILPREDMPYLPDGTPVDIVLNPLGVPSRMNVGQVFELLMGWAASNLDCRVKIIPFDEMHGAEKSQQTVTTFLTEAAKLSGKDWVYNPENPGKLVLRDGRTGLPFDQPVAVGYSHFLKLVHLVDDKIHARSTGPYSLVTQQPLGGKAQQGGQRLGEMEVWALEAYGAAYTLQELLTVKSDDMQGRNEALNAIVKGKPIPRPGTPESFKVLMRELQSLGLDIAVYTEEGKEVDLMQDVNPRRSTPSRPTYESLGVADYDED.

Residues glutamine 1072–aspartate 1097 form a disordered region.

This sequence belongs to the RNA polymerase beta chain family. In terms of assembly, in cyanobacteria the RNAP catalytic core is composed of 2 alpha, 1 beta, 1 beta', 1 gamma and 1 omega subunit. When a sigma factor is associated with the core the holoenzyme is formed, which can initiate transcription.

The enzyme catalyses RNA(n) + a ribonucleoside 5'-triphosphate = RNA(n+1) + diphosphate. In terms of biological role, DNA-dependent RNA polymerase catalyzes the transcription of DNA into RNA using the four ribonucleoside triphosphates as substrates. The sequence is that of DNA-directed RNA polymerase subunit beta from Synechococcus sp. (strain CC9902).